A 101-amino-acid chain; its full sequence is Small ribosomal subunit protein uS14A (101 aa).

Positions 31–73 (IKSPSTTPEARVAAQSELNRQPRDASPVRVRNRDSVDGRPRGH) are disordered. The span at 61-70 (RNRDSVDGRP) shows a compositional bias: basic and acidic residues.

Belongs to the universal ribosomal protein uS14 family. As to quaternary structure, part of the 30S ribosomal subunit. Contacts proteins S3 and S10.

Functionally, binds 16S rRNA, required for the assembly of 30S particles and may also be responsible for determining the conformation of the 16S rRNA at the A site. The chain is Small ribosomal subunit protein uS14A from Mycolicibacterium vanbaalenii (strain DSM 7251 / JCM 13017 / BCRC 16820 / KCTC 9966 / NRRL B-24157 / PYR-1) (Mycobacterium vanbaalenii).